We begin with the raw amino-acid sequence, 342 residues long: Ketol-acid reductoisomerase (NADP(+)) (342 aa).

A KARI N-terminal Rossmann domain is found at Val-2–Thr-181. NADP(+) is bound by residues Tyr-25–Gln-28, Arg-48, Ser-52, and Asp-82–Gln-85. Residue His-107 is part of the active site. Gly-133 serves as a coordination point for NADP(+). The 146-residue stretch at Thr-182–Val-327 folds into the KARI C-terminal knotted domain. Residues Asp-190, Glu-194, Glu-226, and Glu-230 each contribute to the Mg(2+) site. Ser-251 contributes to the substrate binding site.

It belongs to the ketol-acid reductoisomerase family. Mg(2+) is required as a cofactor.

The enzyme catalyses (2R)-2,3-dihydroxy-3-methylbutanoate + NADP(+) = (2S)-2-acetolactate + NADPH + H(+). It catalyses the reaction (2R,3R)-2,3-dihydroxy-3-methylpentanoate + NADP(+) = (S)-2-ethyl-2-hydroxy-3-oxobutanoate + NADPH + H(+). It participates in amino-acid biosynthesis; L-isoleucine biosynthesis; L-isoleucine from 2-oxobutanoate: step 2/4. It functions in the pathway amino-acid biosynthesis; L-valine biosynthesis; L-valine from pyruvate: step 2/4. Its function is as follows. Involved in the biosynthesis of branched-chain amino acids (BCAA). Catalyzes an alkyl-migration followed by a ketol-acid reduction of (S)-2-acetolactate (S2AL) to yield (R)-2,3-dihydroxy-isovalerate. In the isomerase reaction, S2AL is rearranged via a Mg-dependent methyl migration to produce 3-hydroxy-3-methyl-2-ketobutyrate (HMKB). In the reductase reaction, this 2-ketoacid undergoes a metal-dependent reduction by NADPH to yield (R)-2,3-dihydroxy-isovalerate. In Bacillus licheniformis (strain ATCC 14580 / DSM 13 / JCM 2505 / CCUG 7422 / NBRC 12200 / NCIMB 9375 / NCTC 10341 / NRRL NRS-1264 / Gibson 46), this protein is Ketol-acid reductoisomerase (NADP(+)).